The following is a 257-amino-acid chain: Deoxyribose-phosphate aldolase (257 aa).

Asp102 functions as the Proton donor/acceptor in the catalytic mechanism. Lys166 functions as the Schiff-base intermediate with acetaldehyde in the catalytic mechanism. Catalysis depends on Lys198, which acts as the Proton donor/acceptor.

It belongs to the DeoC/FbaB aldolase family. DeoC type 2 subfamily.

The protein resides in the cytoplasm. The enzyme catalyses 2-deoxy-D-ribose 5-phosphate = D-glyceraldehyde 3-phosphate + acetaldehyde. It participates in carbohydrate degradation; 2-deoxy-D-ribose 1-phosphate degradation; D-glyceraldehyde 3-phosphate and acetaldehyde from 2-deoxy-alpha-D-ribose 1-phosphate: step 2/2. In terms of biological role, catalyzes a reversible aldol reaction between acetaldehyde and D-glyceraldehyde 3-phosphate to generate 2-deoxy-D-ribose 5-phosphate. The protein is Deoxyribose-phosphate aldolase of Shewanella loihica (strain ATCC BAA-1088 / PV-4).